The following is a 76-amino-acid chain: Protein sprouty homolog 1 (76 aa).

In terms of domain architecture, SPR spans 1–52; that stretch reads NPCSCSQSHCCSRYLCMGAMSLFLPCLLCYPPAKGCLKLCRGCYDRVNRPGC.

This sequence belongs to the sprouty family. In terms of tissue distribution, brain and interlimb region.

It is found in the cytoplasm. It localises to the membrane. Its function is as follows. Inhibits fibroblast growth factor (FGF)-induced retinal lens fiber differentiation. Inhibits TGFB-induced epithelial-to-mesenchymal transition in lens epithelial cells. This chain is Protein sprouty homolog 1 (SPRY1), found in Gallus gallus (Chicken).